We begin with the raw amino-acid sequence, 159 residues long: Fimbrial protein EcpB (159 aa).

A propeptide spans M1–G6 (leader sequence). F7 carries the N-methylphenylalanine modification. Residues F7–L29 traverse the membrane as a helical segment. C137 and C156 are oxidised to a cystine.

This sequence belongs to the N-Me-Phe pilin family.

It is found in the fimbrium. The protein localises to the membrane. This is Fimbrial protein EcpB (ecpB) from Eikenella corrodens.